A 397-amino-acid chain; its full sequence is Elongation factor Tu (397 aa).

Residues 10–206 (KPHVNIGTIG…AVDESIPDPV (197 aa)) enclose the tr-type G domain. Residues 19 to 26 (GHVDHGKT) form a G1 region. 19-26 (GHVDHGKT) lines the GTP pocket. A Mg(2+)-binding site is contributed by Thr-26. The G2 stretch occupies residues 62–66 (GITIN). Residues 83-86 (DAPG) form a G3 region. GTP contacts are provided by residues 83-87 (DAPGH) and 138-141 (NKSD). Residues 138-141 (NKSD) form a G4 region. Residues 176 to 178 (SAL) are G5.

This sequence belongs to the TRAFAC class translation factor GTPase superfamily. Classic translation factor GTPase family. EF-Tu/EF-1A subfamily. In terms of assembly, monomer.

It is found in the cytoplasm. The catalysed reaction is GTP + H2O = GDP + phosphate + H(+). GTP hydrolase that promotes the GTP-dependent binding of aminoacyl-tRNA to the A-site of ribosomes during protein biosynthesis. This Mycobacteroides abscessus (strain ATCC 19977 / DSM 44196 / CCUG 20993 / CIP 104536 / JCM 13569 / NCTC 13031 / TMC 1543 / L948) (Mycobacterium abscessus) protein is Elongation factor Tu.